The primary structure comprises 378 residues: Mannitol-1-phosphate 5-dehydrogenase (378 aa).

Residue 4 to 15 (SVHFGAGNIGRG) coordinates NAD(+).

Belongs to the mannitol dehydrogenase family.

It carries out the reaction D-mannitol 1-phosphate + NAD(+) = beta-D-fructose 6-phosphate + NADH + H(+). This Streptococcus pneumoniae (strain JJA) protein is Mannitol-1-phosphate 5-dehydrogenase.